We begin with the raw amino-acid sequence, 63 residues long: Putative F-box protein At1g47702 (63 aa).

In terms of domain architecture, F-box spans Lys23 to Asn63.

The polypeptide is Putative F-box protein At1g47702 (Arabidopsis thaliana (Mouse-ear cress)).